The primary structure comprises 253 residues: Ribonuclease HII (253 aa).

The region spanning 70-253 (PLVAGIDEVG…RSFSPVQNAL (184 aa)) is the RNase H type-2 domain. Positions 76, 77, and 168 each coordinate a divalent metal cation.

Belongs to the RNase HII family. Mn(2+) serves as cofactor. The cofactor is Mg(2+).

The protein localises to the cytoplasm. The enzyme catalyses Endonucleolytic cleavage to 5'-phosphomonoester.. Its function is as follows. Endonuclease that specifically degrades the RNA of RNA-DNA hybrids. The polypeptide is Ribonuclease HII (Latilactobacillus sakei subsp. sakei (strain 23K) (Lactobacillus sakei subsp. sakei)).